The sequence spans 850 residues: Translation initiation factor IF-2 (850 aa).

2 disordered regions span residues 50 to 72 and 92 to 267; these read LKSS…KTTS and FVQR…TGPV. The span at 96-135 shows a compositional bias: basic and acidic residues; it reads SPEEIQAEQKREQEERRAAENAAREKADADARQRNEEQAR. Positions 136 to 172 are enriched in low complexity; the sequence is RQAAQAPAAAPVAKAEPAPAAAAPAAPAVPDAPVSED. Composition is skewed to basic and acidic residues over residues 173-210 and 234-243; these read AAAR…RGEA and TTDEESDGFR. Positions 244 to 257 are enriched in basic residues; that stretch reads RGRGGKGKPKKRNQ. Residues 350 to 517 enclose the tr-type G domain; it reads SRAPVVTVMG…AVLLQAEILE (168 aa). Positions 359 to 366 are G1; the sequence is GHVDHGKT. Position 359–366 (359–366) interacts with GTP; the sequence is GHVDHGKT. The segment at 384–388 is G2; it reads GITQH. Residues 405 to 408 are G3; it reads DTPG. GTP is bound by residues 405–409 and 459–462; these read DTPGH and NKID. The interval 459-462 is G4; sequence NKID. The G5 stretch occupies residues 495–497; it reads SAK.

It belongs to the TRAFAC class translation factor GTPase superfamily. Classic translation factor GTPase family. IF-2 subfamily.

The protein resides in the cytoplasm. Functionally, one of the essential components for the initiation of protein synthesis. Protects formylmethionyl-tRNA from spontaneous hydrolysis and promotes its binding to the 30S ribosomal subunits. Also involved in the hydrolysis of GTP during the formation of the 70S ribosomal complex. The sequence is that of Translation initiation factor IF-2 from Pseudomonas entomophila (strain L48).